Consider the following 171-residue polypeptide: Peptide methionine sulfoxide reductase MsrA (171 aa).

The active site involves cysteine 13.

This sequence belongs to the MsrA Met sulfoxide reductase family.

It catalyses the reaction L-methionyl-[protein] + [thioredoxin]-disulfide + H2O = L-methionyl-(S)-S-oxide-[protein] + [thioredoxin]-dithiol. The enzyme catalyses [thioredoxin]-disulfide + L-methionine + H2O = L-methionine (S)-S-oxide + [thioredoxin]-dithiol. In terms of biological role, has an important function as a repair enzyme for proteins that have been inactivated by oxidation. Catalyzes the reversible oxidation-reduction of methionine sulfoxide in proteins to methionine. The chain is Peptide methionine sulfoxide reductase MsrA from Mycobacterium sp. (strain JLS).